Consider the following 503-residue polypeptide: Probable cytosol aminopeptidase (503 aa).

2 residues coordinate Mn(2+): K268 and D273. The active site involves K280. Mn(2+) contacts are provided by D291, D350, and E352. R354 is an active-site residue.

It belongs to the peptidase M17 family. It depends on Mn(2+) as a cofactor.

Its subcellular location is the cytoplasm. It catalyses the reaction Release of an N-terminal amino acid, Xaa-|-Yaa-, in which Xaa is preferably Leu, but may be other amino acids including Pro although not Arg or Lys, and Yaa may be Pro. Amino acid amides and methyl esters are also readily hydrolyzed, but rates on arylamides are exceedingly low.. The enzyme catalyses Release of an N-terminal amino acid, preferentially leucine, but not glutamic or aspartic acids.. Its function is as follows. Presumably involved in the processing and regular turnover of intracellular proteins. Catalyzes the removal of unsubstituted N-terminal amino acids from various peptides. The protein is Probable cytosol aminopeptidase of Corynebacterium efficiens (strain DSM 44549 / YS-314 / AJ 12310 / JCM 11189 / NBRC 100395).